Consider the following 326-residue polypeptide: Tagatose 1,6-diphosphate aldolase 2 (326 aa).

It belongs to the aldolase LacD family.

The catalysed reaction is D-tagatofuranose 1,6-bisphosphate = D-glyceraldehyde 3-phosphate + dihydroxyacetone phosphate. It functions in the pathway carbohydrate metabolism; D-tagatose 6-phosphate degradation; D-glyceraldehyde 3-phosphate and glycerone phosphate from D-tagatose 6-phosphate: step 2/2. The protein is Tagatose 1,6-diphosphate aldolase 2 (lacD2) of Streptococcus agalactiae serotype III (strain NEM316).